The chain runs to 561 residues: MSDLQTPLVRPKRKKTWVDYFVKFRWIIVIFIVLPFSATFYFLIYLGDMWSESKSFEKRQKEHDENVKKVIKRLKGRDASKDGLVCTARKPWIAVGMRNVDYKRARHFEVDLGEFRNILEINKEKMTARVEPLVNMGQISRATVPMNLSLAVVAELDDLTVGGLINGYGIEGSSHIYGLFADTVEAYEIVLAGGELVRATRDNEYSDLYYAIPWSQGTLGLLVAAEIRLIKVKEYMRLTYIPVKGDLQALAQGYIDSFAPKDGDKSKIPDFVEGMVYNPTEGVMMVGTYASKEEAKKKGNKINNVGWWFKPWFYQHAQTALKKGQFVEYIPTREYYHRHTRCLYWEGKLILPFGDQFWFRYLLGWLMPPKVSLLKATQGEAIRNYYHDMHVIQDMLVPLYKVGDALEWVHREMEVYPIWLCPHKLFKQPIKGQIYPEPGFEYENRQGDTEDAQMYTDVGVYYAPGCVLRGEEFDGSEAVRRMEKWLIENHGFQPQYAVSELDEKSFWRMFNGELYEECRKKYRAIGTFMSVYYKSKKGRKTEKEVREAEQAHLETAYAEAD.

Topologically, residues 1–25 (MSDLQTPLVRPKRKKTWVDYFVKFR) are lumenal. At serine 2 the chain carries Phosphoserine. A helical; Signal-anchor membrane pass occupies residues 26–46 (WIIVIFIVLPFSATFYFLIYL). The Cytoplasmic segment spans residues 47–561 (GDMWSESKSF…HLETAYAEAD (515 aa)). Residues 49–232 (MWSESKSFEK…VAAEIRLIKV (184 aa)) enclose the FAD-binding PCMH-type domain. The tract at residues 518-539 (CRKKYRAIGTFMSVYYKSKKGR) is interaction with calmodulin.

This sequence belongs to the DIMINUTO family. Interacts with calmodulin.

The protein resides in the microsome membrane. The catalysed reaction is lathosterol + NADP(+) = 5alpha-cholesta-7,24-dien-3beta-ol + NADPH + H(+). Functionally, plays a critical role in the general process of plant cell elongation. Involved in the synthesis of campesterol, an early precursor of brassinolide. Required for the conversion of 24-methylenecholesterol to campesterol and for the conversion of isofucosterol to sitosterol. Necessary for both the isomerization and reduction of 24-methylenecholesterol. Regulates indirectly phytochrome-mediated light responses through the modulation of brassinosteroid biosynthesis. The polypeptide is Delta(24)-sterol reductase (DIM) (Arabidopsis thaliana (Mouse-ear cress)).